We begin with the raw amino-acid sequence, 62 residues long: Small ribosomal subunit protein bS21C (62 aa).

The tract at residues 43–62 (EKSKRKKLALHKQSKRRFRT) is disordered. Over residues 45–62 (SKRKKLALHKQSKRRFRT) the composition is skewed to basic residues.

This sequence belongs to the bacterial ribosomal protein bS21 family.

In Trichormus variabilis (strain ATCC 29413 / PCC 7937) (Anabaena variabilis), this protein is Small ribosomal subunit protein bS21C.